The primary structure comprises 490 residues: Myocilin (490 aa).

The first 18 residues, 1–18 (MPAVQLLLLACLLGGVGA), serve as a signal peptide directing secretion. A coiled-coil region spans residues 51–170 (GQAMLAIQEL…QEVASLRRGQ (120 aa)). Residues 152 to 186 (LARRLESSSQEVASLRRGQCPQAHSSSQDVPSGSR) form a disordered region. Residues 173 to 182 (QAHSSSQDVP) are compositionally biased toward polar residues. Positions 230 to 489 (GCGELVWVGE…MVSYDIKLSR (260 aa)) constitute an Olfactomedin-like domain. Cysteines 231 and 419 form a disulfide. Ca(2+)-binding residues include aspartate 366, asparagine 414, alanine 415, isoleucine 463, and aspartate 464. The short motif at 488 to 490 (SRL) is the Microbody targeting signal element.

In terms of assembly, homodimer (via N-terminus). Can also form higher oligomers. Interacts with OLFM3, FN1, NRCAM, GLDN and NFASC. Interacts (via N-terminus) with MYL2. Interacts with SFRP1, FRZB, FZD7, FZD10, FZD1 and WIF1; regulates Wnt signaling. Interacts with SNTA1; regulates muscle hypertrophy. Interacts with ERBB2 and ERBB3; activates ERBB2-ERBB3 signaling pathway. Interacts with SNCG; affects its secretion and its aggregation. In terms of processing, palmitoylated. Post-translationally, undergoes a calcium-dependent proteolytic cleavage at Gln-212 by CAPN2 in the endoplasmic reticulum. The result is the production of two fragments, one of 35 kDa containing the C-terminal olfactomedin-like domain, and another of 20 kDa containing the N-terminal leucine zipper-like domain. Glycosylated. As to expression, the myocilin 35 kDa fragment is detected in iris and ciliary body.

The protein localises to the secreted. It localises to the golgi apparatus. The protein resides in the cytoplasmic vesicle. Its subcellular location is the extracellular space. It is found in the extracellular matrix. The protein localises to the extracellular exosome. It localises to the mitochondrion. The protein resides in the mitochondrion intermembrane space. Its subcellular location is the mitochondrion inner membrane. It is found in the mitochondrion outer membrane. The protein localises to the rough endoplasmic reticulum. It localises to the cell projection. The protein resides in the cilium. Its subcellular location is the endoplasmic reticulum. Its function is as follows. Secreted glycoprotein regulating the activation of different signaling pathways in adjacent cells to control different processes including cell adhesion, cell-matrix adhesion, cytoskeleton organization and cell migration. Promotes substrate adhesion, spreading and formation of focal contacts. Negatively regulates cell-matrix adhesion and stress fiber assembly through Rho protein signal transduction. Modulates the organization of actin cytoskeleton by stimulating the formation of stress fibers through interactions with components of Wnt signaling pathways. Promotes cell migration through activation of PTK2 and the downstream phosphatidylinositol 3-kinase signaling. Plays a role in bone formation and promotes osteoblast differentiation in a dose-dependent manner through mitogen-activated protein kinase signaling. Mediates myelination in the peripheral nervous system through ERBB2/ERBB3 signaling. Plays a role as a regulator of muscle hypertrophy through the components of dystrophin-associated protein complex. Involved in positive regulation of mitochondrial depolarization. Plays a role in neurite outgrowth. May participate in the obstruction of fluid outflow in the trabecular meshwork. This chain is Myocilin (MYOC), found in Bos taurus (Bovine).